The sequence spans 209 residues: Dual specificity protein phosphatase 22 (209 aa).

The region spanning 4 to 144 (GMNKILPSLF…LEDFGKHDVY (141 aa)) is the Tyrosine-protein phosphatase domain. The Phosphocysteine intermediate role is filled by cysteine 88. The segment at 170-193 (DKHKQQEAAESQSATSSGRQWSSH) is disordered. The segment covering 177 to 193 (AAESQSATSSGRQWSSH) has biased composition (low complexity).

It belongs to the protein-tyrosine phosphatase family. Non-receptor class dual specificity subfamily.

It is found in the cytoplasm. Its subcellular location is the nucleus. It catalyses the reaction O-phospho-L-tyrosyl-[protein] + H2O = L-tyrosyl-[protein] + phosphate. The catalysed reaction is O-phospho-L-seryl-[protein] + H2O = L-seryl-[protein] + phosphate. It carries out the reaction O-phospho-L-threonyl-[protein] + H2O = L-threonyl-[protein] + phosphate. Activates the Jnk signaling pathway. Dephosphorylates and deactivates p38 and stress-activated protein kinase/c-Jun N-terminal kinase (SAPK/JNK). This is Dual specificity protein phosphatase 22 (dusp22) from Xenopus tropicalis (Western clawed frog).